The primary structure comprises 418 residues: Argininosuccinate synthase (418 aa).

ATP-binding positions include 14–22 (AYSGGLDTS) and A42. L-citrulline contacts are provided by Y94 and S99. G124 provides a ligand contact to ATP. The L-aspartate site is built by T126, N130, and D131. N130 is a binding site for L-citrulline. Residues R134, S183, S192, E273, and Y285 each contribute to the L-citrulline site.

It belongs to the argininosuccinate synthase family. Type 1 subfamily. Homotetramer.

It localises to the cytoplasm. The catalysed reaction is L-citrulline + L-aspartate + ATP = 2-(N(omega)-L-arginino)succinate + AMP + diphosphate + H(+). Its pathway is amino-acid biosynthesis; L-arginine biosynthesis; L-arginine from L-ornithine and carbamoyl phosphate: step 2/3. This Colwellia psychrerythraea (strain 34H / ATCC BAA-681) (Vibrio psychroerythus) protein is Argininosuccinate synthase.